The chain runs to 579 residues: CTP synthase (579 aa).

Residues 310–558 (YVELHDAYLS…VAAAIGCLDQ (249 aa)) enclose the Glutamine amidotransferase type-1 domain. Residues C402, H531, and E533 each act as for GATase activity in the active site.

The protein belongs to the CTP synthase family.

It catalyses the reaction UTP + L-glutamine + ATP + H2O = CTP + L-glutamate + ADP + phosphate + 2 H(+). Its pathway is pyrimidine metabolism; CTP biosynthesis via de novo pathway; CTP from UDP: step 2/2. Its function is as follows. Catalyzes the ATP-dependent amination of UTP to CTP with either L-glutamine or ammonia as the source of nitrogen. The sequence is that of CTP synthase (pyr-7) from Neurospora crassa (strain ATCC 24698 / 74-OR23-1A / CBS 708.71 / DSM 1257 / FGSC 987).